The following is a 242-amino-acid chain: uncharacterized protein (242 aa).

This is an uncharacterized protein from Acanthamoeba polyphaga mimivirus (APMV).